Consider the following 205-residue polypeptide: Guanylate kinase (205 aa).

The Guanylate kinase-like domain maps to 19-197 (PKLFTISAPA…AYRVLKSIFI (179 aa)). 26 to 33 (APAGVGKT) is a binding site for ATP.

The protein belongs to the guanylate kinase family.

The protein localises to the cytoplasm. It catalyses the reaction GMP + ATP = GDP + ADP. Essential for recycling GMP and indirectly, cGMP. The chain is Guanylate kinase (gmk) from Chlamydia pneumoniae (Chlamydophila pneumoniae).